The following is a 340-amino-acid chain: Chorismate mutase 1, chloroplastic (340 aa).

The N-terminal 65 residues, 1–65 (MEASLLMRSS…KPRSGTSSVH (65 aa)), are a transit peptide targeting the chloroplast. An N-acetylalanine modification is found at Ala66. An L-phenylalanine-binding site is contributed by Arg79. A Chorismate mutase domain is found at 79 to 340 (RVDESESLTL…QVEYLLRRLD (262 aa)). L-tyrosine-binding positions include Arg150 and 211–214 (NYGS). 211 to 214 (NYGS) serves as a coordination point for L-phenylalanine.

Homodimer. In terms of tissue distribution, expressed in roots, shoots, rosette leaves, stems, cauline leaves, flowers and siliques.

The protein localises to the plastid. The protein resides in the chloroplast. It catalyses the reaction chorismate = prephenate. The protein operates within metabolic intermediate biosynthesis; prephenate biosynthesis; prephenate from chorismate: step 1/1. Allosterically inhibited by tyrosine and phenylalanine. Activated by tryptophan. Functionally, may play a role in chloroplast biogenesis. This is Chorismate mutase 1, chloroplastic from Arabidopsis thaliana (Mouse-ear cress).